The sequence spans 912 residues: WD repeat-containing protein 44 (912 aa).

Disordered stretches follow at residues 206 to 352 (DIIE…ELTD), 399 to 426 (SNDA…LKQK), and 460 to 481 (RDEV…GMPY). The segment covering 236-258 (NRPPQPINAPPPRPPPPARPAPP) has biased composition (pro residues). A compositionally biased stretch (basic and acidic residues) spans 264 to 278 (GDTDFDRSSGFEYQK). The span at 288–311 (SPNTLTENMNRDSQPSLDLASATS) shows a compositional bias: polar residues. Positions 410 to 422 (KPQSHQSETDGGK) are enriched in basic and acidic residues. Over residues 469 to 478 (DDPSSSDDEG) the composition is skewed to acidic residues. Residues 511–550 (EHVGAVWTMKFSHCGRLLASAGQDNVVRIWVLKNAFDYFN) form a WD 1 repeat. The segment at 559–594 (EGRVSPSPSQESLNSSKSDTDGGVFSGTDDVDPDDK) is disordered. Low complexity predominate over residues 563–575 (SPSPSQESLNSSK). 7 WD repeats span residues 608-646 (GHTA…CLCC), 648-688 (QHID…VALW), 693-732 (GQTK…YHTQ), 743-782 (RVGR…LSMK), 787-826 (VNSS…SKFT), 841-880 (AHNA…ENIP), and 882-912 (GALK…KNIS). The segment at 861-882 (AETSSEKQEGDQAEPVENIPSG) is disordered.

The protein localises to the cytoplasm. Its subcellular location is the cytosol. It is found in the perinuclear region. It localises to the endosome membrane. The protein resides in the golgi apparatus. The protein localises to the trans-Golgi network. Its function is as follows. Downstream effector for rab11. May be involved in vesicle recycling. May also be involved in the inhibition of the intracellular ciliogenesis pathway. In Xenopus laevis (African clawed frog), this protein is WD repeat-containing protein 44 (wdr44).